We begin with the raw amino-acid sequence, 80 residues long: Conotoxin MaIr193 (80 aa).

The N-terminal stretch at 1 to 22 (MKLTCMMIVAVLFLTAWTLVTA) is a signal peptide. Positions 23-51 (DGTRDGLKNRFPKARLEMKNSEAPRSRGR) are excised as a propeptide. Cystine bridges form between Cys52-Cys69, Cys59-Cys73, and Cys68-Cys77. Pro64 carries the post-translational modification 4-hydroxyproline.

This sequence belongs to the conotoxin O1 superfamily. Expressed by the venom duct.

It is found in the secreted. This Conus marmoreus (Marble cone) protein is Conotoxin MaIr193.